Reading from the N-terminus, the 75-residue chain is Chaplin-D (75 aa).

The N-terminal stretch at 1–23 (MKKSAAVVAGAIMALGMAAPAFA) is a signal peptide. In terms of domain architecture, Chaplin spans 34 to 74 (SPGVLSGNVIQVPVHVPVNVCGNSINVVGLLNPAFGNKCEN). Cys-54 and Cys-72 form a disulfide bridge.

It belongs to the chaplin family. Short chaplin subfamily.

It localises to the cell surface. The protein localises to the secreted. It is found in the cell wall. Its subcellular location is the fimbrium. Its function is as follows. One of 8 partially redundant surface-active proteins required for efficient formation of aerial mycelium; the short chaplins assemble into a hydrophobic, amyloidal fibrillar surface layer that envelopes and protects aerial hyphae and spores, presumably anchored to the long chaplins. Chaplins have an overlapping function with the surface-active SapB peptide; chaplins are essential on minimal medium while on rich medium both chaplins and SapB are required for efficient aerial hyphae formation. Chaplins are also involved in cell attachment to a hydrophobic surface. Forms amyloid fibrils in vitro probably composed of stacked beta-sheets, at low extracellular concentrations individually restores the ability to form aerial hyphae to a chaplin-deficient strain. A small chaplin extract (ChpD, ChpE, ChpF, ChpG and ChpH) self-assembles into 2 different amyloids; small fibrils at the air-water interface form an amphipathic membrane that resembles spore-surface structures involved in aerial hyphae formation, and hydrophilic fibrils in solution that resemble the fibers that attach cells to a hydrophobic surface. At the air-water interface the hydrophilic surface is in contact with water (probably equivalent to the peptidoglycan layer), while the hydrophobic face is exposed to the air, making the surface of the aerial hyphae hydrophobic. A minimal chaplin strain capable of forming aerial mycelium/hyphae on minimal medium contains ChpC, ChpE and ChpH. The strain also has restored rodlet formation on the hyphae surface. A second minimal chaplin strain with ChpA, ChpD and ChpE makes slightly less robust hyphae. A small chaplin extract applied to a chaplin-deficient strain restores aerial hyphae formation. The small chaplin extract forms an amyloid-like structure similar to that seen on the surface of cells without rodlets (rdlA-rdlB deletions), and is highly surface active, reducing surface tension from 72 to 26 mJ/m(2), which probably allows escape of hyphae from an aqueous environment into air. The polypeptide is Chaplin-D (Streptomyces coelicolor (strain ATCC BAA-471 / A3(2) / M145)).